Reading from the N-terminus, the 86-residue chain is Cell division topological specificity factor (86 aa).

The protein belongs to the MinE family.

Functionally, prevents the cell division inhibition by proteins MinC and MinD at internal division sites while permitting inhibition at polar sites. This ensures cell division at the proper site by restricting the formation of a division septum at the midpoint of the long axis of the cell. This chain is Cell division topological specificity factor, found in Rhizobium johnstonii (strain DSM 114642 / LMG 32736 / 3841) (Rhizobium leguminosarum bv. viciae).